Reading from the N-terminus, the 146-residue chain is Transcriptional regulator MraZ (146 aa).

SpoVT-AbrB domains are found at residues 5-47 (EYYH…TITD) and 76-119 (SVQV…AKER).

Belongs to the MraZ family. In terms of assembly, forms oligomers.

It is found in the cytoplasm. The protein localises to the nucleoid. The polypeptide is Transcriptional regulator MraZ (Dictyoglomus turgidum (strain DSM 6724 / Z-1310)).